A 472-amino-acid polypeptide reads, in one-letter code: Ribulose bisphosphate carboxylase large chain 1 (472 aa).

N115 and T165 together coordinate substrate. Residue K167 is the Proton acceptor of the active site. Position 169 (K169) interacts with substrate. Mg(2+) is bound by residues K193, D195, and E196. K193 carries the N6-carboxylysine modification. H286 (proton acceptor) is an active-site residue. Residues R287, H319, and S371 each contribute to the substrate site.

Belongs to the RuBisCO large chain family. Type I subfamily. As to quaternary structure, heterohexadecamer of 8 large chains and 8 small chains. The cofactor is Mg(2+).

It carries out the reaction 2 (2R)-3-phosphoglycerate + 2 H(+) = D-ribulose 1,5-bisphosphate + CO2 + H2O. The enzyme catalyses D-ribulose 1,5-bisphosphate + O2 = 2-phosphoglycolate + (2R)-3-phosphoglycerate + 2 H(+). In terms of biological role, ruBisCO catalyzes two reactions: the carboxylation of D-ribulose 1,5-bisphosphate, the primary event in carbon dioxide fixation, as well as the oxidative fragmentation of the pentose substrate. Both reactions occur simultaneously and in competition at the same active site. In Allochromatium vinosum (strain ATCC 17899 / DSM 180 / NBRC 103801 / NCIMB 10441 / D) (Chromatium vinosum), this protein is Ribulose bisphosphate carboxylase large chain 1.